Here is a 385-residue protein sequence, read N- to C-terminus: Elsinochromes biosynthesis cluster protein HP2 (385 aa).

Residues 1-22 (MVLLYILIMVALIPMYMTVVQD) form the signal peptide. 2 helical membrane passes run 94-114 (TVLS…SMFD) and 148-168 (FYGQ…IVLW). Residue Asn-187 is glycosylated (N-linked (GlcNAc...) asparagine). The helical transmembrane segment at 209 to 229 (SWTFGQIVPIVLLVSPLVAAF) threads the bilayer. N-linked (GlcNAc...) asparagine glycosylation occurs at Asn-248. Transmembrane regions (helical) follow at residues 309–329 (AILF…LPLA) and 344–364 (YYAF…AVPF).

The protein resides in the membrane. Its function is as follows. Part of the gene cluster that mediates the biosynthesis of elsinochromes, pigments consisting of at least four interconvertible tautomers (A, B, C and D) that have a core phenolic quinone to which various side chains are attached and which play an important role in fungal pathogenesis. The non-reducing polyketide synthase PKS1 was proposed to iteratively catalyze decarboxylation between acetyl-CoA and malonyl-CoA subunits for polyketide chain elongation. The released polyketide undergoes cyclization to form an aromatic ring, and proceeds via serial modification steps to produce the heptaketide back- bone of elsinochrome. As elsinochrome has a symmetrical structure, two identical heptaketides are fused to form a core 1,2-dihydrobenzo-perylene ring structure, which can then be successively modified to produce the various derivatives of elsinochrome. Some of these reactions may be cooperatively carried out, at least in part, by the products of RDT1, OXR1 and PKS1. PRF1, embedded within the elsinochrome cluster possibly functions to stabilize some of the biosynthetic enzymes required for elsinochrome production. As prefoldin is a hexamer containing 2 a and 4 b subunits, additional prefoldin subunits, whose coding genes may not immediately link to the elsinochrome biosynthetic gene cluster, are required to fulfill the chaperone function. In addition, no methyltransferase-coding gene exists within the biosynthetic gene cluster, even though elsinochrome has four methyl groups at positions C3, C7, C8 and C12. Apparently, the identified gene cluster does not contain the entire entourage of genes responsible for elsinochrome biosynthesis. Once elsinochrome is synthesized, it must be exported outside the fungal cells, which is probably accomplished by the ECT1 transporter, to avoid toxicity. In Elsinoe fawcettii (Citrus scab fungus), this protein is Elsinochromes biosynthesis cluster protein HP2.